A 644-amino-acid chain; its full sequence is Protein cueball (644 aa).

Positions 1–26 (MIRIRFGMDVLLVLLLATCLLSPAHG) are cleaved as a signal peptide. Topologically, residues 27-531 (TPLEWDFAVT…VCLTPKVWTS (505 aa)) are extracellular. N82 and N108 each carry an N-linked (GlcNAc...) asparagine glycan. 3 LDL-receptor class B repeats span residues 121 to 166 (MNLF…DVCR), 167 to 211 (RKLY…DQLS), and 212 to 257 (DRLF…TNDA). N175, N190, and N196 each carry an N-linked (GlcNAc...) asparagine glycan. The N-linked (GlcNAc...) asparagine glycan is linked to N313. 2 EGF-like domains span residues 398–430 (EIRECHNYCVHGTCQMSESAYPKCYCQPGFTGE) and 433–471 (EVSVCAGLCLNGGHCRASKDEKEAPSCECPAKFGGARCE). Disulfide bonds link C402–C411, C406–C421, C437–C447, C441–C459, and C461–C470. Residues N473 and N508 are each glycosylated (N-linked (GlcNAc...) asparagine). A helical transmembrane segment spans residues 532-552 (SVIIILVIGIVSSLLLVAVIV). Residues 553-644 (HGIRRLYKPK…LIHNMEDDLY (92 aa)) are Cytoplasmic-facing.

The protein belongs to the cueball family.

The protein localises to the cell membrane. Its function is as follows. Has a role in spermatogenesis and oogenesis. The chain is Protein cueball from Drosophila erecta (Fruit fly).